The primary structure comprises 454 residues: Adenylosuccinate synthetase isozyme 1 B (454 aa).

Residues 1–24 (MSGTRASNDRSSHPGAGGHKRPRY) form a disordered region. Residues 39-45 (GDEGKGK) and 67-69 (GHT) contribute to the GTP site. The Proton acceptor role is filled by D40. Mg(2+) contacts are provided by D40 and G67. D40 is a substrate binding site. IMP contacts are provided by residues 40-43 (DEGK), 65-68 (NAGH), T160, R174, N253, T268, and R332. H68 acts as the Proton donor in catalysis. 328–334 (VTTGRKR) is a binding site for substrate. GTP contacts are provided by residues R334, 360–362 (KLD), and 442–445 (GVGK).

It belongs to the adenylosuccinate synthetase family. Homodimer. It depends on Mg(2+) as a cofactor.

It is found in the cytoplasm. It carries out the reaction IMP + L-aspartate + GTP = N(6)-(1,2-dicarboxyethyl)-AMP + GDP + phosphate + 2 H(+). The protein operates within purine metabolism; AMP biosynthesis via de novo pathway; AMP from IMP: step 1/2. In terms of biological role, component of the purine nucleotide cycle (PNC), which interconverts IMP and AMP to regulate the nucleotide levels in various tissues, and which contributes to glycolysis and ammoniagenesis. Catalyzes the first committed step in the biosynthesis of AMP from IMP. The chain is Adenylosuccinate synthetase isozyme 1 B (adss1-b) from Xenopus laevis (African clawed frog).